Here is a 209-residue protein sequence, read N- to C-terminus: NADH-ubiquinone oxidoreductase subunit 9 (209 aa).

This sequence belongs to the complex I 30 kDa subunit family. In terms of assembly, complex I is composed of about 45 different subunits.

It localises to the mitochondrion inner membrane. It carries out the reaction a ubiquinone + NADH + 5 H(+)(in) = a ubiquinol + NAD(+) + 4 H(+)(out). Functionally, core subunit of the mitochondrial membrane respiratory chain NADH dehydrogenase (Complex I) that is believed to belong to the minimal assembly required for catalysis. Complex I functions in the transfer of electrons from NADH to the respiratory chain. The immediate electron acceptor for the enzyme is believed to be ubiquinone. The protein is NADH-ubiquinone oxidoreductase subunit 9 (nad9) of Dictyostelium discoideum (Social amoeba).